Reading from the N-terminus, the 230-residue chain is Lactate utilization protein C (230 aa).

It belongs to the LutC/YkgG family.

Is involved in L-lactate degradation and allows cells to grow with lactate as the sole carbon source. This is Lactate utilization protein C from Halalkalibacterium halodurans (strain ATCC BAA-125 / DSM 18197 / FERM 7344 / JCM 9153 / C-125) (Bacillus halodurans).